Reading from the N-terminus, the 134-residue chain is Probable glycine cleavage system H protein (134 aa).

A Lipoyl-binding domain is found at 29 to 110 (TVLVGITDYA…PYENWIAKLK (82 aa)). At Lys70 the chain carries N6-lipoyllysine.

The protein belongs to the GcvH family. In terms of assembly, the glycine cleavage system is composed of four proteins: P, T, L and H. (R)-lipoate serves as cofactor.

The glycine cleavage system catalyzes the degradation of glycine. The H protein shuttles the methylamine group of glycine from the P protein to the T protein. This chain is Probable glycine cleavage system H protein, found in Thermococcus gammatolerans (strain DSM 15229 / JCM 11827 / EJ3).